The following is a 227-amino-acid chain: Cytidylate kinase (227 aa).

12–20 provides a ligand contact to ATP; it reads GPSGSGKGT.

This sequence belongs to the cytidylate kinase family. Type 1 subfamily.

Its subcellular location is the cytoplasm. It carries out the reaction CMP + ATP = CDP + ADP. The catalysed reaction is dCMP + ATP = dCDP + ADP. The chain is Cytidylate kinase from Nitrosococcus oceani (strain ATCC 19707 / BCRC 17464 / JCM 30415 / NCIMB 11848 / C-107).